The following is a 751-amino-acid chain: Semaphorin-3C (751 aa).

Residues M1–G21 form the signal peptide. The Sema domain maps to R28–L511. A glycan (N-linked (GlcNAc...) asparagine) is linked at N81. C101 and C112 form a disulfide bridge. The N-linked (GlcNAc...) asparagine glycan is linked to N123. 3 cysteine pairs are disulfide-bonded: C130–C139, C266–C378, and C290–C338. N268 is a glycosylation site (N-linked (GlcNAc...) asparagine). N465 carries an N-linked (GlcNAc...) asparagine glycan. A disulfide bridge links C514 with C532. Residues A571 to A655 enclose the Ig-like C2-type domain. N-linked (GlcNAc...) asparagine glycosylation is found at N585 and N586. C643 and C709 are oxidised to a cystine. Positions S712–K731 are enriched in basic and acidic residues. Residues S712–S751 form a disordered region.

Belongs to the semaphorin family. In terms of tissue distribution, collapsin-1, -2, -3, and -5 bind to overlapping but distinct axon tracts.

The protein localises to the secreted. Its function is as follows. Induces the collapse and paralysis of neuronal growth cones. Could potentially act as repulsive cues toward specific neuronal populations. Binds to neuropilin. The polypeptide is Semaphorin-3C (SEMA3C) (Gallus gallus (Chicken)).